A 387-amino-acid polypeptide reads, in one-letter code: Sulfate adenylyltransferase (387 aa).

It belongs to the sulfate adenylyltransferase family.

The enzyme catalyses sulfate + ATP + H(+) = adenosine 5'-phosphosulfate + diphosphate. It functions in the pathway sulfur metabolism; hydrogen sulfide biosynthesis; sulfite from sulfate: step 1/3. This is Sulfate adenylyltransferase (sat) from Deinococcus radiodurans (strain ATCC 13939 / DSM 20539 / JCM 16871 / CCUG 27074 / LMG 4051 / NBRC 15346 / NCIMB 9279 / VKM B-1422 / R1).